The sequence spans 156 residues: Small ribosomal subunit protein uS7 (156 aa).

This sequence belongs to the universal ribosomal protein uS7 family. Part of the 30S ribosomal subunit. Contacts proteins S9 and S11.

In terms of biological role, one of the primary rRNA binding proteins, it binds directly to 16S rRNA where it nucleates assembly of the head domain of the 30S subunit. Is located at the subunit interface close to the decoding center, probably blocks exit of the E-site tRNA. This is Small ribosomal subunit protein uS7 from Pseudarthrobacter chlorophenolicus (strain ATCC 700700 / DSM 12829 / CIP 107037 / JCM 12360 / KCTC 9906 / NCIMB 13794 / A6) (Arthrobacter chlorophenolicus).